We begin with the raw amino-acid sequence, 103 residues long: Putative membrane protein insertion efficiency factor (103 aa).

The protein belongs to the UPF0161 family.

Its subcellular location is the cell inner membrane. In terms of biological role, could be involved in insertion of integral membrane proteins into the membrane. This Chlamydia pneumoniae (Chlamydophila pneumoniae) protein is Putative membrane protein insertion efficiency factor.